The following is a 152-amino-acid chain: Transcriptional repressor NrdR (152 aa).

Residues 3-34 fold into a zinc finger; it reads CPYCQHPDSDVIDTRKLHNGETIRRRRKCEAC. The ATP-cone domain occupies 49–139; the sequence is ITVVKKNGER…VYRSFADIGK (91 aa).

Belongs to the NrdR family. The cofactor is Zn(2+).

In terms of biological role, negatively regulates transcription of bacterial ribonucleotide reductase nrd genes and operons by binding to NrdR-boxes. This chain is Transcriptional repressor NrdR, found in Roseiflexus castenholzii (strain DSM 13941 / HLO8).